A 167-amino-acid chain; its full sequence is uncharacterized protein (167 aa).

The chain crosses the membrane as a helical span at residues 39-59; sequence LSLFSLSPLFLLLSISSLIFS. The stretch at 92–122 forms a coiled coil; sequence LGTQIEMITQAMTTLESRVTDLQQESNDHRT. The interval 134–167 is disordered; that stretch reads RDLGDENRPKPTTNKMIATGEQHKGEVSTSLFHD. Basic and acidic residues predominate over residues 154-167; sequence EQHKGEVSTSLFHD.

It localises to the mitochondrion membrane. This is an uncharacterized protein from Arabidopsis thaliana (Mouse-ear cress).